A 160-amino-acid polypeptide reads, in one-letter code: Putative 4-hydroxy-4-methyl-2-oxoglutarate aldolase (160 aa).

Residues 76 to 79 and Arg98 each bind substrate; that span reads GDMI. Position 99 (Asp99) interacts with a divalent metal cation.

Belongs to the class II aldolase/RraA-like family. In terms of assembly, homotrimer. The cofactor is a divalent metal cation.

The catalysed reaction is 4-hydroxy-4-methyl-2-oxoglutarate = 2 pyruvate. The enzyme catalyses oxaloacetate + H(+) = pyruvate + CO2. Catalyzes the aldol cleavage of 4-hydroxy-4-methyl-2-oxoglutarate (HMG) into 2 molecules of pyruvate. Also contains a secondary oxaloacetate (OAA) decarboxylase activity due to the common pyruvate enolate transition state formed following C-C bond cleavage in the retro-aldol and decarboxylation reactions. This Alcanivorax borkumensis (strain ATCC 700651 / DSM 11573 / NCIMB 13689 / SK2) protein is Putative 4-hydroxy-4-methyl-2-oxoglutarate aldolase.